The sequence spans 318 residues: MAFSWQEQIKPAGTQDIQCDIEYLDKSYIHVYLDGAETTGYTWTSATNIRLNTALAASTTVLLIRKTEREYLYIEFASGSPFIEVNVDSQNTQFLHLAQELVEGRAIPGFYGTISMNGYRITDLANPINAQDAATKAYVDTADTLLGQRIDAEHSGWVSAVHAEAVTRKAADDALSMRTSALENTFISGVETVSYPWSAVLTAATDEVTPGLAFTKAVVEINGVGQIRGYSFEIVDNTILFAEVLPAGTVVAARLGADVTAGDGFATQASVDYLANSLGDLAYLDKAAAVSDATSTGDVVAKLNALLAALRTSGVLAT.

The protein localises to the virion. In terms of biological role, anchors indirectly the receptor binding (RBP) protein (depolymerase) to the virion. In Klebsiella pneumoniae (Bacteriophage NTUH-K2044-K1-1), this protein is Anchor protein.